We begin with the raw amino-acid sequence, 95 residues long: Protein TusB (95 aa).

Belongs to the DsrH/TusB family. Heterohexamer, formed by a dimer of trimers. The hexameric TusBCD complex contains 2 copies each of TusB, TusC and TusD. The TusBCD complex interacts with TusE.

The protein localises to the cytoplasm. Its function is as follows. Part of a sulfur-relay system required for 2-thiolation of 5-methylaminomethyl-2-thiouridine (mnm(5)s(2)U) at tRNA wobble positions. This chain is Protein TusB, found in Sodalis glossinidius (strain morsitans).